The sequence spans 65 residues: Neurotoxin BmK-M3 (65 aa).

Positions 2–64 (RDAYIAKPEN…VPIRVWGKCH (63 aa)) constitute an LCN-type CS-alpha/beta domain. 4 disulfides stabilise this stretch: C12-C63, C16-C36, C22-C46, and C26-C48.

This sequence belongs to the long (4 C-C) scorpion toxin superfamily. Sodium channel inhibitor family. Alpha subfamily. As to expression, expressed by the venom gland.

It is found in the secreted. Functionally, binds to sodium channels (Nav) and inhibits the inactivation of the activated channels, thereby blocking neuronal transmission. The chain is Neurotoxin BmK-M3 from Olivierus martensii (Manchurian scorpion).